The chain runs to 120 residues: Large ribosomal subunit protein uL18 (120 aa).

Belongs to the universal ribosomal protein uL18 family. In terms of assembly, part of the 50S ribosomal subunit; part of the 5S rRNA/L5/L18/L25 subcomplex. Contacts the 5S and 23S rRNAs.

This is one of the proteins that bind and probably mediate the attachment of the 5S RNA into the large ribosomal subunit, where it forms part of the central protuberance. The chain is Large ribosomal subunit protein uL18 from Rhizobium meliloti (strain 1021) (Ensifer meliloti).